The chain runs to 281 residues: Proteasome subunit beta (281 aa).

Positions 1–53 (MEANTRSTGRLPAAFLTPGSSSFMDFLGEHQPEMLPGNRQLPPVQGVIEAPHG) are cleaved as a propeptide — removed in mature form; by autocatalysis. The Nucleophile role is filled by threonine 54.

Belongs to the peptidase T1B family. In terms of assembly, the 20S proteasome core is composed of 14 alpha and 14 beta subunits that assemble into four stacked heptameric rings, resulting in a barrel-shaped structure. The two inner rings, each composed of seven catalytic beta subunits, are sandwiched by two outer rings, each composed of seven alpha subunits. The catalytic chamber with the active sites is on the inside of the barrel. Has probably a gated structure, the ends of the cylinder being occluded by the N-termini of the alpha-subunits. Is likely capped by the proteasome-associated ATPase, ARC.

It is found in the cytoplasm. It carries out the reaction Cleavage of peptide bonds with very broad specificity.. It functions in the pathway protein degradation; proteasomal Pup-dependent pathway. With respect to regulation, the formation of the proteasomal ATPase ARC-20S proteasome complex, likely via the docking of the C-termini of ARC into the intersubunit pockets in the alpha-rings, may trigger opening of the gate for substrate entry. Interconversion between the open-gate and close-gate conformations leads to a dynamic regulation of the 20S proteasome proteolysis activity. Peptidolytic activity is completely inhibited by lactacystin, and to a lesser extent, by N-acetyl-Leu-Leu-norleucinal (Ac-LLnL) and benzoyloxycarbonyl-Leu-Leu-Leu-vinylsulfone (Z-LLL-VS) in vitro. Component of the proteasome core, a large protease complex with broad specificity involved in protein degradation. The S.coelicolor proteasome is able to cleave oligopeptides after hydrophobic residues, but not after basic or acidic residues, thus displaying chymotrypsin-like activity but not trypsin-like activity. This Streptomyces coelicolor (strain ATCC BAA-471 / A3(2) / M145) protein is Proteasome subunit beta.